The sequence spans 965 residues: MALLCGLGQVTLRIWVSLPSQSENGIGFLAARAFLRSGGMEALTTQLGPGREGSSSPNSKQELQPYSGSSALKPNQVGETSLYGVPIVSLVIDGQERLCLAQISNTLLKNYSYNEIHNRRVALGITCVQCTPVQLEILRRAGAMPISSRRCGMITKREAERLCKSFLGEHKPPKLPENFAFDVVHECAWGSRGSFIPARYNSSRAKCIKCGYCSMYFSPNKFIFHSHRTPDAKYTQPDAANFNSWRRHLKLSDKSATDELSHAWEDVKAMFNGGTRKRTFSLQGGGGGGANGGSGGQGKGGAGGGGGGGPGCGAEMAPGPPPHKSLRCGEDEAAGPPGPPPPHPQRGLGLATGASGPAGPGGPGGGAGVRSYPVIPVPSKGFGLLQKLPPPLFPHPYGFPTAFGLCPKKDDPVLGAGEPKGGPGTGSGGGGAGTGGGAGGPGASHLPPGAGAGPGGGAMFWGHQPSGAAKDAAAVAAAAAAATVYPTFPMFWPAAGSLPVPSYPAAQSQAKAVAAAVAAAAAAAAAAAGSGAPEPLDGAEPAKESGLGAEERCPSALSRGPLDEDGTDEALPPPLAPLPPPPPPPARKGSYVSAFRPVVKDTESIAKLYGSAREAYGAGPARGPGPGAGSGGYVSPDFLSEGSSSYNSASPDVDTADEPEVDVESNRFPDDEDAQEETEPSAPSAGGGPDGEQPTGPPSATSSGADGPANSPDGGSPRPRRRLGPPPAGRPAFGDLAAEDLVRRPERSPPSGGGGYELREPCGPLGGPAPAKVFAPERDEHVKSAAVALGPAASYVCTPEAHEPDKEDNHSPADDLETRKSYPDQRSISQPSPANTDRGEDGLTLDVTGTHLVEKDIENLAREELQKLLLEQMELRKKLEREFQSLKDNFQDQMKRELAYREEMVQQLQIVRDTLCNELDQERKARYAIQQKLKEAHDALHHFSCKMLTPRHCTGNCSFKPPLLP.

Disordered regions lie at residues 45 to 72, 278 to 367, 410 to 458, 530 to 592, 615 to 777, and 796 to 843; these read TQLG…SSAL, RTFS…GGGA, DDPV…GGGA, SGAP…GSYV, AYGA…FAPE, and VCTP…EDGL. Gly residues-rich tracts occupy residues 283-312, 356-367, and 418-442; these read QGGG…GPGC, GPAGPGGPGGGA, and EPKG…GGPG. Over residues 571 to 586 the composition is skewed to pro residues; it reads LPPPLAPLPPPPPPPA. Residues 620-632 show a composition bias toward gly residues; that stretch reads PARGPGPGAGSGG. Polar residues predominate over residues 641-650; it reads EGSSSYNSAS. Acidic residues-rich tracts occupy residues 654–663 and 670–679; these read DTADEPEVDV and DDEDAQEETE. Residues 800 to 823 are compositionally biased toward basic and acidic residues; the sequence is EAHEPDKEDNHSPADDLETRKSYP. Over residues 824–835 the composition is skewed to polar residues; it reads DQRSISQPSPAN. Residues 858–922 adopt a coiled-coil conformation; that stretch reads ENLAREELQK…DTLCNELDQE (65 aa).

The protein belongs to the SKI family. In terms of assembly, interacts with LBX1. Interacts with SMAD1, SMAD2 and SMAD3. Present specifically in cerebellar Purkinje cells (at protein level).

Its subcellular location is the nucleus. Its function is as follows. Acts as a transcriptional corepressor of LBX1. Inhibits BMP signaling. The sequence is that of SKI family transcriptional corepressor 1 (SKOR1) from Homo sapiens (Human).